Reading from the N-terminus, the 713-residue chain is Glutamine--fructose-6-phosphate aminotransferase [isomerizing] (713 aa).

The active-site For GATase activity is the Cys2. Residues 2-316 (CGIFGYVNFL…DDDIAHIYDG (315 aa)) enclose the Glutamine amidotransferase type-2 domain. SIS domains follow at residues 389-528 (WLST…DSIS) and 561-703 (CNSS…VDFP).

Homotetramer.

The enzyme catalyses D-fructose 6-phosphate + L-glutamine = D-glucosamine 6-phosphate + L-glutamate. It functions in the pathway nucleotide-sugar biosynthesis; UDP-N-acetyl-alpha-D-glucosamine biosynthesis; alpha-D-glucosamine 6-phosphate from D-fructose 6-phosphate: step 1/1. Its function is as follows. Involved in amino sugar synthesis (formation of chitin, supplies the amino sugars of asparagine-linked oligosaccharides of glycoproteins). The protein is Glutamine--fructose-6-phosphate aminotransferase [isomerizing] (GFA1) of Candida albicans (strain SC5314 / ATCC MYA-2876) (Yeast).